The primary structure comprises 444 residues: Phosphoglucosamine mutase (444 aa).

S100 (phosphoserine intermediate) is an active-site residue. Mg(2+) contacts are provided by S100, D240, D242, and D244. The residue at position 100 (S100) is a Phosphoserine.

This sequence belongs to the phosphohexose mutase family. Requires Mg(2+) as cofactor. Post-translationally, activated by phosphorylation.

It carries out the reaction alpha-D-glucosamine 1-phosphate = D-glucosamine 6-phosphate. Catalyzes the conversion of glucosamine-6-phosphate to glucosamine-1-phosphate. The polypeptide is Phosphoglucosamine mutase (Desulforamulus reducens (strain ATCC BAA-1160 / DSM 100696 / MI-1) (Desulfotomaculum reducens)).